The sequence spans 212 residues: Interleukin-6 (212 aa).

Positions 1–29 (MNSFSTSAFGPVAFSLGLLLVLPAAFPAP) are cleaved as a signal peptide. 2 disulfide bridges follow: C72/C78 and C101/C111. N-linked (GlcNAc...) asparagine glycosylation is present at N73. A glycan (N-linked (GlcNAc...) asparagine) is linked at N172.

Belongs to the IL-6 superfamily. Component of a hexamer of two molecules each of IL6, IL6R and IL6ST; first binds to IL6R to associate with the signaling subunit IL6ST. Interacts with IL6R (via the N-terminal ectodomain); this interaction may be affected by IL6R-binding with SORL1, hence decreasing IL6 cis signaling. Interacts with SORL1 (via the N-terminal ectodomain); this interaction leads to IL6 internalization and lysosomal degradation. May form a trimeric complex with the soluble SORL1 ectodomain and soluble IL6R receptor; this interaction might stabilize circulating IL6, hence promoting IL6 trans signaling.

It is found in the secreted. Cytokine with a wide variety of biological functions in immunity, tissue regeneration, and metabolism. Binds to IL6R, then the complex associates to the signaling subunit IL6ST/gp130 to trigger the intracellular IL6-signaling pathway. The interaction with the membrane-bound IL6R and IL6ST stimulates 'classic signaling', whereas the binding of IL6 and soluble IL6R to IL6ST stimulates 'trans-signaling'. Alternatively, 'cluster signaling' occurs when membrane-bound IL6:IL6R complexes on transmitter cells activate IL6ST receptors on neighboring receiver cells. In terms of biological role, IL6 is a potent inducer of the acute phase response. Rapid production of IL6 contributes to host defense during infection and tissue injury, but excessive IL6 synthesis is involved in disease pathology. In the innate immune response, is synthesized by myeloid cells, such as macrophages and dendritic cells, upon recognition of pathogens through toll-like receptors (TLRs) at the site of infection or tissue injury. In the adaptive immune response, is required for the differentiation of B cells into immunoglobulin-secreting cells. Plays a major role in the differentiation of CD4(+) T cell subsets. Essential factor for the development of T follicular helper (Tfh) cells that are required for the induction of germinal-center formation. Required to drive naive CD4(+) T cells to the Th17 lineage. Also required for proliferation of myeloma cells and the survival of plasmablast cells. Functionally, acts as an essential factor in bone homeostasis and on vessels directly or indirectly by induction of VEGF, resulting in increased angiogenesis activity and vascular permeability. Induces, through 'trans-signaling' and synergistically with IL1B and TNF, the production of VEGF. Involved in metabolic controls, is discharged into the bloodstream after muscle contraction increasing lipolysis and improving insulin resistance. 'Trans-signaling' in central nervous system also regulates energy and glucose homeostasis. Mediates, through GLP-1, crosstalk between insulin-sensitive tissues, intestinal L cells and pancreatic islets to adapt to changes in insulin demand. Also acts as a myokine. Plays a protective role during liver injury, being required for maintenance of tissue regeneration. Also has a pivotal role in iron metabolism by regulating HAMP/hepcidin expression upon inflammation or bacterial infection. Through activation of IL6ST-YAP-NOTCH pathway, induces inflammation-induced epithelial regeneration. The chain is Interleukin-6 (IL6) from Cercocebus atys (Sooty mangabey).